The following is an 88-amino-acid chain: Small ribosomal subunit protein uS15 (88 aa).

Belongs to the universal ribosomal protein uS15 family. As to quaternary structure, part of the 30S ribosomal subunit. Forms a bridge to the 50S subunit in the 70S ribosome, contacting the 23S rRNA.

One of the primary rRNA binding proteins, it binds directly to 16S rRNA where it helps nucleate assembly of the platform of the 30S subunit by binding and bridging several RNA helices of the 16S rRNA. In terms of biological role, forms an intersubunit bridge (bridge B4) with the 23S rRNA of the 50S subunit in the ribosome. This chain is Small ribosomal subunit protein uS15, found in Variovorax paradoxus (strain S110).